Reading from the N-terminus, the 410-residue chain is MNPQLNNLTLPIYMDYQATTPIDPRVMEAMLPYFTTKFGNPHSRSHSFGWEAENAVEEARSMVAKLIGADTKEIIFTSGATESNNLAIKGIAKFYSNKKNHIITVVSEHKCVLDACRHLEQEGIKITYLPIKPNGIIDLETLKNAITDQTMLVSVMVVNNEIGVVQPLKEIGQICREKGVFFHSDIAQGFGKIPIDVNAFNIDLASISGHKIYGPKGIGALYVRKKPRVRVTPLINGGGQERGIRSGTLPTPLIVGLGMAAEIAYSEMEKDTKHINYLFDRFLNNIHKRISKVYLNGDKNQRYKGNLNLSFAGVEGESMILAIKDLAVSSGSACTSASLEPSYVLRSMGIGEELAHTAIRFGIGRFTTEQEVDYAVNLICSKIDKLRELSPLWEMMQEGIDLKKIKWAVH.

Pyridoxal 5'-phosphate contacts are provided by residues alanine 80–threonine 81, asparagine 160, glutamine 188, and serine 208–histidine 210. Lysine 211 is subject to N6-(pyridoxal phosphate)lysine. Threonine 248 provides a ligand contact to pyridoxal 5'-phosphate. Cysteine 334 acts as the Cysteine persulfide intermediate in catalysis. Residue cysteine 334 participates in [2Fe-2S] cluster binding.

This sequence belongs to the class-V pyridoxal-phosphate-dependent aminotransferase family. NifS/IscS subfamily. In terms of assembly, homodimer. Forms a heterotetramer with IscU, interacts with other sulfur acceptors. Requires pyridoxal 5'-phosphate as cofactor.

It localises to the cytoplasm. It catalyses the reaction (sulfur carrier)-H + L-cysteine = (sulfur carrier)-SH + L-alanine. Its pathway is cofactor biosynthesis; iron-sulfur cluster biosynthesis. Master enzyme that delivers sulfur to a number of partners involved in Fe-S cluster assembly, tRNA modification or cofactor biosynthesis. Catalyzes the removal of elemental sulfur atoms from cysteine to produce alanine. Functions as a sulfur delivery protein for Fe-S cluster synthesis onto IscU, an Fe-S scaffold assembly protein, as well as other S acceptor proteins. This chain is Cysteine desulfurase IscS, found in Rickettsia africae (strain ESF-5).